Consider the following 273-residue polypeptide: Dermonecrotic toxin SdSicTox-betaIIB1bxi (273 aa).

The active site involves histidine 4. The Mg(2+) site is built by glutamate 24 and aspartate 26. The active-site Nucleophile is the histidine 40. Cystine bridges form between cysteine 44-cysteine 50 and cysteine 46-cysteine 189. Aspartate 84 lines the Mg(2+) pocket.

Belongs to the arthropod phospholipase D family. Class II subfamily. Mg(2+) is required as a cofactor. Expressed by the venom gland.

Its subcellular location is the secreted. The enzyme catalyses an N-(acyl)-sphingosylphosphocholine = an N-(acyl)-sphingosyl-1,3-cyclic phosphate + choline. The catalysed reaction is an N-(acyl)-sphingosylphosphoethanolamine = an N-(acyl)-sphingosyl-1,3-cyclic phosphate + ethanolamine. It catalyses the reaction a 1-acyl-sn-glycero-3-phosphocholine = a 1-acyl-sn-glycero-2,3-cyclic phosphate + choline. It carries out the reaction a 1-acyl-sn-glycero-3-phosphoethanolamine = a 1-acyl-sn-glycero-2,3-cyclic phosphate + ethanolamine. Functionally, dermonecrotic toxins cleave the phosphodiester linkage between the phosphate and headgroup of certain phospholipids (sphingolipid and lysolipid substrates), forming an alcohol (often choline) and a cyclic phosphate. This toxin acts on sphingomyelin (SM). It may also act on ceramide phosphoethanolamine (CPE), lysophosphatidylcholine (LPC) and lysophosphatidylethanolamine (LPE), but not on lysophosphatidylserine (LPS), and lysophosphatidylglycerol (LPG). It acts by transphosphatidylation, releasing exclusively cyclic phosphate products as second products. Induces dermonecrosis, hemolysis, increased vascular permeability, edema, inflammatory response, and platelet aggregation. This is Dermonecrotic toxin SdSicTox-betaIIB1bxi from Sicarius cf. damarensis (strain GJB-2008) (Six-eyed sand spider).